The following is a 366-amino-acid chain: UDP-N-acetylglucosamine--N-acetylmuramyl-(pentapeptide) pyrophosphoryl-undecaprenol N-acetylglucosamine transferase (366 aa).

Residues 10 to 12 (TGG), asparagine 124, arginine 165, serine 195, isoleucine 250, and glutamine 295 contribute to the UDP-N-acetyl-alpha-D-glucosamine site.

This sequence belongs to the glycosyltransferase 28 family. MurG subfamily.

The protein resides in the cell inner membrane. It carries out the reaction di-trans,octa-cis-undecaprenyl diphospho-N-acetyl-alpha-D-muramoyl-L-alanyl-D-glutamyl-meso-2,6-diaminopimeloyl-D-alanyl-D-alanine + UDP-N-acetyl-alpha-D-glucosamine = di-trans,octa-cis-undecaprenyl diphospho-[N-acetyl-alpha-D-glucosaminyl-(1-&gt;4)]-N-acetyl-alpha-D-muramoyl-L-alanyl-D-glutamyl-meso-2,6-diaminopimeloyl-D-alanyl-D-alanine + UDP + H(+). It participates in cell wall biogenesis; peptidoglycan biosynthesis. Its function is as follows. Cell wall formation. Catalyzes the transfer of a GlcNAc subunit on undecaprenyl-pyrophosphoryl-MurNAc-pentapeptide (lipid intermediate I) to form undecaprenyl-pyrophosphoryl-MurNAc-(pentapeptide)GlcNAc (lipid intermediate II). This Thermodesulfovibrio yellowstonii (strain ATCC 51303 / DSM 11347 / YP87) protein is UDP-N-acetylglucosamine--N-acetylmuramyl-(pentapeptide) pyrophosphoryl-undecaprenol N-acetylglucosamine transferase.